An 807-amino-acid chain; its full sequence is Putative histidine biosynthesis bifunctional protein HisCD (807 aa).

A histidinol dehydrogenase region spans residues 1-440 (MTDHFDTLIR…ALNIAGQGVN (440 aa)). Residues Gln261 and His264 each contribute to the Zn(2+) site. Residues Glu328 and His329 contribute to the active site. Positions 362 and 421 each coordinate Zn(2+). The segment at 441 to 807 (MNNIFDANLL…VNEQPKEIAN (367 aa)) is histidinol-phosphate aminotransferase. An N6-(pyridoxal phosphate)lysine modification is found at Lys655.

It in the N-terminal section; belongs to the histidinol dehydrogenase family. The protein in the C-terminal section; belongs to the class-II pyridoxal-phosphate-dependent aminotransferase family. Histidinol-phosphate aminotransferase subfamily. Homodimer. It depends on Zn(2+) as a cofactor. Requires pyridoxal 5'-phosphate as cofactor.

It catalyses the reaction L-histidinol phosphate + 2-oxoglutarate = 3-(imidazol-4-yl)-2-oxopropyl phosphate + L-glutamate. The enzyme catalyses L-histidinol + 2 NAD(+) + H2O = L-histidine + 2 NADH + 3 H(+). The protein operates within amino-acid biosynthesis; L-histidine biosynthesis; L-histidine from 5-phospho-alpha-D-ribose 1-diphosphate: step 7/9. It functions in the pathway amino-acid biosynthesis; L-histidine biosynthesis; L-histidine from 5-phospho-alpha-D-ribose 1-diphosphate: step 9/9. Its function is as follows. Catalyzes the sequential NAD-dependent oxidations of L-histidinol to L-histidinaldehyde and then to L-histidine. The sequence is that of Putative histidine biosynthesis bifunctional protein HisCD (hisCD) from Photorhabdus laumondii subsp. laumondii (strain DSM 15139 / CIP 105565 / TT01) (Photorhabdus luminescens subsp. laumondii).